A 294-amino-acid chain; its full sequence is Early 4 ORF6 protein (294 aa).

Positions 239–255 match the Nuclear localization signal motif; it reads ARRTRRLMLRAVRIIAE.

Belongs to the adenoviridae E4 30 to 34 kDa protein family. Interacts with E1B-55k.

It localises to the host nucleus. It is found in the host cytoplasm. In terms of biological role, plays a major role to prevent cellular inhibition of viral genome replication by nuclear bodies. Assembles an SCF-like E3 ubiquitin ligase complex based on the cellular proteins ELOB, ELOC, CUL5 and RBX1, in cooperation with viral E1B-55K. This viral RING-type ligase ubiquitinates cellular substrates prior to proteasomal degradation: p53/TP53, LIG4, MRE11-RAD50-NBS1 (MRN) complex, ITGA3, DAXX and BLM. The polypeptide is Early 4 ORF6 protein (Homo sapiens (Human)).